An 86-amino-acid chain; its full sequence is uncharacterized protein (86 aa).

This is an uncharacterized protein from Helicobacter pylori (strain J99 / ATCC 700824) (Campylobacter pylori J99).